The chain runs to 474 residues: Trigger factor (474 aa).

The PPIase FKBP-type domain occupies 171-258 (GDVAVIDFQG…LKELKTRDLP (88 aa)). A disordered region spans residues 441-474 (TEVDAASATVETTATETAEEAPEAPKAKKGKKKA). Residues 444 to 456 (DAASATVETTATE) show a composition bias toward low complexity.

This sequence belongs to the FKBP-type PPIase family. Tig subfamily.

The protein localises to the cytoplasm. The catalysed reaction is [protein]-peptidylproline (omega=180) = [protein]-peptidylproline (omega=0). Involved in protein export. Acts as a chaperone by maintaining the newly synthesized protein in an open conformation. Functions as a peptidyl-prolyl cis-trans isomerase. The sequence is that of Trigger factor from Synechococcus sp. (strain ATCC 27144 / PCC 6301 / SAUG 1402/1) (Anacystis nidulans).